Consider the following 292-residue polypeptide: Zinc metalloproteinase nas-3 (292 aa).

The N-terminal stretch at 1-16 is a signal peptide; sequence MYRFIIFFSLLALTAS. A Peptidase M12A domain is found at 56-249; sequence RGIAIHPWQW…RNINTLYKCN (194 aa). 2 disulfide bridges follow: C103/C248 and C128/C158. Position 169 (H169) interacts with Zn(2+). Residue E170 is part of the active site. Positions 173 and 179 each coordinate Zn(2+).

It depends on Zn(2+) as a cofactor.

The protein resides in the secreted. In terms of biological role, metalloprotease. This is Zinc metalloproteinase nas-3 (nas-3) from Caenorhabditis elegans.